The primary structure comprises 343 residues: GTPase Obg (343 aa).

Positions 1 to 157 (MKFIDEVSIS…IEVRLELKLI (157 aa)) constitute an Obg domain. Residues 13–44 (SGRGGPGCVSFRRESMQARGGPDGGNGGKGGD) are disordered. The span at 33-43 (GPDGGNGGKGG) shows a compositional bias: gly residues. The OBG-type G domain occupies 158 to 338 (ADVGIVGFPN…FVQELARQIL (181 aa)). GTP contacts are provided by residues 164–171 (GFPNAGKS), 189–193 (FTTLT), 211–214 (DIPG), 290–293 (NKID), and 319–321 (SAV). 2 residues coordinate Mg(2+): serine 171 and threonine 191.

It belongs to the TRAFAC class OBG-HflX-like GTPase superfamily. OBG GTPase family. In terms of assembly, monomer. Mg(2+) is required as a cofactor.

It is found in the cytoplasm. Functionally, an essential GTPase which binds GTP, GDP and possibly (p)ppGpp with moderate affinity, with high nucleotide exchange rates and a fairly low GTP hydrolysis rate. Plays a role in control of the cell cycle, stress response, ribosome biogenesis and in those bacteria that undergo differentiation, in morphogenesis control. The sequence is that of GTPase Obg from Bdellovibrio bacteriovorus (strain ATCC 15356 / DSM 50701 / NCIMB 9529 / HD100).